The sequence spans 1178 residues: MLQRSRLLWLAVFITLWVSSDAQDDAKEEENTFDLLQISNINRKTIGAKLFRGPDPAIPAYRFIRFDHIPPFKPEKLKKIVKLIRQNEGFILSATLRQDRQSRGTILALEGPGISERQFEIISNGRANTLDLIYWVDGFQNVISLEDVDLADSQWKNLTVQVTGENYNLYVGCDLIDSFILEEPFYEQLKAENSRMYVAKGSIRENHFRGLLQNIHLIFDTSIEDVLRKKGCQRSQSTEVNTINESTEILHLSPAVTTEYVGEKTEKKAEFCDRSCEELGTMFTELTGLRIVVNNLADNLQKVSEENQIMWELIGPNKTLKNQSVCWQDGRVFADSESWIVDSCTKCTCQDSKIVCHQITCPPVSCADPSFIEGECCPVCSHSDDSEEGWSPWSDWTKCSVTCGSGTQMRGRSCDVTRSACTGPHIQTRMCSFKKCDHRIRQDGGWSHWSPWSSCSVTCGVGNITRIRLCNSPIPQMGGKNCVGNGRETEKCEKAPCPVNGQWGPWSPWSACTVTCGGGIRERSRLCNSPEPQYGGKPCVGDTKQHDMCNKRDCPIDGCLSNPCFPGAECNSYPDGSWSCGPCPAGFLGNGTVCEDLDECIAVSDVCFKVNQVHRCVNTNPGFHCLPCPPRYKGSQPYGVGLEVAKTEKQVCEPENPCKDKTHSCHKSAECIYLGHFSDPMYKCECRTGYAGDGRICGEDSDLDGWPNNNLVCAANATYHCVKDNCPLLPNSGQEDFDKDGKGDACDEDDDNDGVEDDKDNCPLLFNPRQFDYDKDEVGDRCDNCPYVHNPAQIDTDNNGEGDSCAVDIDGDDIFNERDNCPYVYNTDQSDTDGDGVGDQCDNCPLMHNPDQTDADNDLVGDQCDNNEDIDEDGHQNNQDNCPYIPNANQADHDKDGKGDACDPDDDNDGIPDDRDNCRLRYNPEQEDSDGDGRGDICKDDFDDDNVPDIFDVCPENNAISETDFRKFQMVPLDPKGTAQIDPNWVIRHQGKELVQTANSDPGIAVGYDEFSSVDFSGTFYVNTDRDDDYAGFVFGYQSSSRFYVLMWKQVTQTYWEDKPTRAYGYSGVSLKVVNSTTGTGEHLRNALWHTGNTPGQVRTLWHDPKNIGWKDYTAYRWHLIHRPKTGLIKVLVYEGKQVMVDSGPIYDTTFAGGRLGLFVFSQEMVYFSDLKYECRDA.

A signal peptide spans 1–22 (MLQRSRLLWLAVFITLWVSSDA). The Laminin G-like domain occupies 25–221 (DAKEEENTFD…LQNIHLIFDT (197 aa)). 4 N-linked (GlcNAc...) asparagine glycosylation sites follow: N157, N244, N317, and N322. The 58-residue stretch at 324–381 (SVCWQDGRVFADSESWIVDSCTKCTCQDSKIVCHQITCPPVSCADPSFIEGECCPVCS) folds into the VWFC domain. 3 consecutive TSP type-1 domains span residues 387–437 (EEGW…KKCD), 443–498 (DGGW…APCP), and 500–555 (NGQW…RDCP). Intrachain disulfides connect C399–C431, C403–C436, C414–C421, C455–C492, C459–C497, C470–C482, C512–C549, C516–C554, C527–C539, C559–C570, C564–C580, C583–C594, C600–C616, C607–C625, C628–C652, C658–C671, C665–C684, C686–C697, C713–C721, C726–C746, C762–C782, C785–C805, C821–C841, C844–C864, C882–C902, C918–C938, and C954–C1175. N463 is a glycosylation site (N-linked (GlcNAc...) asparagine). An EGF-like 1 domain is found at 555-595 (PIDGCLSNPCFPGAECNSYPDGSWSCGPCPAGFLGNGTVCE). N590 is a glycosylation site (N-linked (GlcNAc...) asparagine). In terms of domain architecture, EGF-like 2 spans 654–698 (PENPCKDKTHSCHKSAECIYLGHFSDPMYKCECRTGYAGDGRICG). TSP type-3 repeat units follow at residues 699 to 734 (EDSD…NSGQ), 735 to 770 (EDFD…NPRQ), 771 to 793 (FDYD…NPAQ), 794 to 829 (IDTD…NTDQ), 830 to 852 (SDTD…NPDQ), 853 to 890 (TDAD…NANQ), 891 to 926 (ADHD…NPEQ), and 927 to 962 (EDSD…AISE). An N-linked (GlcNAc...) asparagine glycan is attached at N716. The segment at 737 to 760 (FDKDGKGDACDEDDDNDGVEDDKD) is disordered. Over residues 746-759 (CDEDDDNDGVEDDK) the composition is skewed to acidic residues. Residues 852–941 (QTDADNDLVG…DGRGDICKDD (90 aa)) form a disordered region. Positions 853-872 (TDADNDLVGDQCDNNEDIDE) are enriched in acidic residues. Residues 891-901 (ADHDKDGKGDA) are compositionally biased toward basic and acidic residues. The span at 902 to 911 (CDPDDDNDGI) shows a compositional bias: acidic residues. Composition is skewed to basic and acidic residues over residues 912–924 (PDDR…RYNP) and 931–940 (GDGRGDICKD). Positions 934–936 (RGD) match the Cell attachment site motif. The 213-residue stretch at 966–1178 (RKFQMVPLDP…SDLKYECRDA (213 aa)) folds into the TSP C-terminal domain. The N-linked (GlcNAc...) asparagine glycan is linked to N1075.

The protein belongs to the thrombospondin family. As to quaternary structure, homotrimer; disulfide-linked. Can bind to fibrinogen, fibronectin, laminin and type V collagen.

In terms of biological role, adhesive glycoprotein that mediates cell-to-cell and cell-to-matrix interactions. This is Thrombospondin-2 (THBS2) from Gallus gallus (Chicken).